Here is a 436-residue protein sequence, read N- to C-terminus: Indole-3-acetyl-aspartic acid hydrolase (436 aa).

The protein belongs to the peptidase M20 family. Monomer.

The enzyme catalyses (indol-3-yl)acetyl-L-aspartate + H2O = (indol-3-yl)acetate + L-aspartate. Its function is as follows. Hydrolyzes indole-3-acetyl-aspartate (IAA-Asp) to indole-3-acetic acid (IAA). Shows an exclusively high substrate specificity for IAA-Asp. This is Indole-3-acetyl-aspartic acid hydrolase from Enterobacter agglomerans (Erwinia herbicola).